Reading from the N-terminus, the 443-residue chain is Na(+)-translocating NADH-quinone reductase subunit A (443 aa).

It belongs to the NqrA family. As to quaternary structure, composed of six subunits; NqrA, NqrB, NqrC, NqrD, NqrE and NqrF.

It carries out the reaction a ubiquinone + n Na(+)(in) + NADH + H(+) = a ubiquinol + n Na(+)(out) + NAD(+). In terms of biological role, NQR complex catalyzes the reduction of ubiquinone-1 to ubiquinol by two successive reactions, coupled with the transport of Na(+) ions from the cytoplasm to the periplasm. NqrA to NqrE are probably involved in the second step, the conversion of ubisemiquinone to ubiquinol. The sequence is that of Na(+)-translocating NADH-quinone reductase subunit A from Mannheimia succiniciproducens (strain KCTC 0769BP / MBEL55E).